Here is a 209-residue protein sequence, read N- to C-terminus: FMN-dependent NADH:quinone oxidoreductase (209 aa).

FMN contacts are provided by residues Ser9 and 15–17; that span reads SNS.

The protein belongs to the azoreductase type 1 family. As to quaternary structure, homodimer. FMN is required as a cofactor.

The catalysed reaction is 2 a quinone + NADH + H(+) = 2 a 1,4-benzosemiquinone + NAD(+). It carries out the reaction N,N-dimethyl-1,4-phenylenediamine + anthranilate + 2 NAD(+) = 2-(4-dimethylaminophenyl)diazenylbenzoate + 2 NADH + 2 H(+). Quinone reductase that provides resistance to thiol-specific stress caused by electrophilic quinones. In terms of biological role, also exhibits azoreductase activity. Catalyzes the reductive cleavage of the azo bond in aromatic azo compounds to the corresponding amines. This chain is FMN-dependent NADH:quinone oxidoreductase, found in Bordetella bronchiseptica (strain ATCC BAA-588 / NCTC 13252 / RB50) (Alcaligenes bronchisepticus).